A 177-amino-acid polypeptide reads, in one-letter code: Large ribosomal subunit protein uL6 (177 aa).

This sequence belongs to the universal ribosomal protein uL6 family. Part of the 50S ribosomal subunit.

This protein binds to the 23S rRNA, and is important in its secondary structure. It is located near the subunit interface in the base of the L7/L12 stalk, and near the tRNA binding site of the peptidyltransferase center. This Methanothermobacter thermautotrophicus (strain ATCC 29096 / DSM 1053 / JCM 10044 / NBRC 100330 / Delta H) (Methanobacterium thermoautotrophicum) protein is Large ribosomal subunit protein uL6.